Here is a 425-residue protein sequence, read N- to C-terminus: Formyl-CoA:oxalate CoA-transferase (425 aa).

CoA is bound by residues 17 to 18 (QS), Arg-38, 72 to 75 (LDTK), 96 to 98 (NFG), Arg-104, and 136 to 139 (KVYE). Asp-168 acts as the Nucleophile in catalysis. A substrate-binding site is contributed by 247–249 (GGQ).

This sequence belongs to the CoA-transferase III family. Frc subfamily. In terms of assembly, homodimer.

It carries out the reaction formyl-CoA + oxalate = oxalyl-CoA + formate. It functions in the pathway metabolic intermediate degradation; oxalate degradation; CO(2) and formate from oxalate: step 1/2. Involved in the catabolism of oxalate and in the adapatation to low pH via the induction of the oxalate-dependent acid tolerance response (ATR). Catalyzes the transfer of the CoA moiety from formyl-CoA to oxalate. This chain is Formyl-CoA:oxalate CoA-transferase, found in Rhodopseudomonas palustris (strain TIE-1).